The primary structure comprises 626 residues: Putative folylpolyglutamate synthase (626 aa).

Position 144–147 (144–147 (GKGS)) interacts with ATP. The Mg(2+) site is built by Ser168, Glu235, and His263. ATP is bound by residues Arg412 and Asp430.

This sequence belongs to the folylpolyglutamate synthase family.

The enzyme catalyses (6S)-5,6,7,8-tetrahydrofolyl-(gamma-L-Glu)(n) + L-glutamate + ATP = (6S)-5,6,7,8-tetrahydrofolyl-(gamma-L-Glu)(n+1) + ADP + phosphate + H(+). Its pathway is cofactor biosynthesis; tetrahydrofolylpolyglutamate biosynthesis. Its function is as follows. Conversion of folates to polyglutamate derivatives. In Dictyostelium discoideum (Social amoeba), this protein is Putative folylpolyglutamate synthase (folC).